Consider the following 323-residue polypeptide: Transmembrane protein 171 (323 aa).

4 consecutive transmembrane segments (helical) span residues 22–42 (IFFL…ISIF), 57–77 (MVLK…VILA), 112–132 (LIFG…GIWV), and 159–179 (FLSL…FFVV). Residues 251-268 (YSSLFNLSRTPTPENQGA) are compositionally biased toward polar residues. Residues 251-323 (YSSLFNLSRT…LGAPSESSPP (73 aa)) form a disordered region. Positions 281-290 (SGPGSSSESS) are enriched in low complexity.

Its subcellular location is the membrane. This is Transmembrane protein 171 (Tmem171) from Rattus norvegicus (Rat).